The primary structure comprises 206 residues: Holliday junction branch migration complex subunit RuvA (206 aa).

The interval 1-68 (MITFVRGMLA…EDAMQLFGFL (68 aa)) is domain I. The interval 69–147 (EPGERELFGQ…KWREESGLSA (79 aa)) is domain II. The flexible linker stretch occupies residues 147 to 151 (AMGAR). The domain III stretch occupies residues 152-206 (ASSRVYEEVELALLALGFAPGEVVRALDAVAPAMAGEEQTEAWLRAAIAWLSEQG).

Belongs to the RuvA family. As to quaternary structure, homotetramer. Forms an RuvA(8)-RuvB(12)-Holliday junction (HJ) complex. HJ DNA is sandwiched between 2 RuvA tetramers; dsDNA enters through RuvA and exits via RuvB. An RuvB hexamer assembles on each DNA strand where it exits the tetramer. Each RuvB hexamer is contacted by two RuvA subunits (via domain III) on 2 adjacent RuvB subunits; this complex drives branch migration. In the full resolvosome a probable DNA-RuvA(4)-RuvB(12)-RuvC(2) complex forms which resolves the HJ.

Its subcellular location is the cytoplasm. Its function is as follows. The RuvA-RuvB-RuvC complex processes Holliday junction (HJ) DNA during genetic recombination and DNA repair, while the RuvA-RuvB complex plays an important role in the rescue of blocked DNA replication forks via replication fork reversal (RFR). RuvA specifically binds to HJ cruciform DNA, conferring on it an open structure. The RuvB hexamer acts as an ATP-dependent pump, pulling dsDNA into and through the RuvAB complex. HJ branch migration allows RuvC to scan DNA until it finds its consensus sequence, where it cleaves and resolves the cruciform DNA. The chain is Holliday junction branch migration complex subunit RuvA from Gloeobacter violaceus (strain ATCC 29082 / PCC 7421).